Reading from the N-terminus, the 1263-residue chain is DNA-directed RNA polymerase subunit beta (1263 aa).

It belongs to the RNA polymerase beta chain family. The RNAP catalytic core consists of 2 alpha, 1 beta, 1 beta' and 1 omega subunit. When a sigma factor is associated with the core the holoenzyme is formed, which can initiate transcription.

It carries out the reaction RNA(n) + a ribonucleoside 5'-triphosphate = RNA(n+1) + diphosphate. In terms of biological role, DNA-dependent RNA polymerase catalyzes the transcription of DNA into RNA using the four ribonucleoside triphosphates as substrates. This chain is DNA-directed RNA polymerase subunit beta, found in Thermotoga sp. (strain RQ2).